The primary structure comprises 509 residues: MKLAYWMYAGPAHIGTLRVASSFKNVHAIMHAPLGDDYFNVMRSMLERERDFTPVTASIVDRHVLARGSQNKVVDNITRKDKEERPDLIVLTPTCTSSILQEDLQNFVNRASMNSNSDVILADVNHYRVNELQAADRTLEQVVRFYIEKAKNNNDLDLIKTTKPSANIIGIFTLGFHNQHDCRELKRLLQDLGIQINEVIPEGGSVSNLKKLPKAWFNLVPYREVGLMTAIYLEKEFKMPYVSTTPMGVVDTGSCIKEIENIINSYTQDKISYDEYIDKQTRFVSQAAWFSRSIDCQNLTGKKAVVFGDATHAASMTRILSKEMGIYVICAGTYCTHDADWFKEQVQGYCDEVLITDNHTEVGDLIARVEPAAIFGTQMERHIGKRLNIPCGVISAPVHIQNFPLGYRPFLGYEGTNQIADLVYNSFTLGMEDHLLEIFGGHDTKEVITKGLSTDSELRWTSESENELRKIPGFVRGKIKRNTEKFARQNNVTEITVEIMYAAKEAMNA.

Asp36 contacts [4Fe-4S] cluster. Asp295 functions as the Proton donor in the catalytic mechanism. Residue 430–431 coordinates substrate; the sequence is GM.

This sequence belongs to the ChlB/BchB/BchZ family. As to quaternary structure, protochlorophyllide reductase is composed of three subunits; ChlL, ChlN and ChlB. Forms a heterotetramer of two ChlB and two ChlN subunits. [4Fe-4S] cluster serves as cofactor.

The protein resides in the plastid. It is found in the chloroplast. It catalyses the reaction chlorophyllide a + oxidized 2[4Fe-4S]-[ferredoxin] + 2 ADP + 2 phosphate = protochlorophyllide a + reduced 2[4Fe-4S]-[ferredoxin] + 2 ATP + 2 H2O. The protein operates within porphyrin-containing compound metabolism; chlorophyll biosynthesis (light-independent). Functionally, component of the dark-operative protochlorophyllide reductase (DPOR) that uses Mg-ATP and reduced ferredoxin to reduce ring D of protochlorophyllide (Pchlide) to form chlorophyllide a (Chlide). This reaction is light-independent. The NB-protein (ChlN-ChlB) is the catalytic component of the complex. The chain is Light-independent protochlorophyllide reductase subunit B from Mesostigma viride (Green alga).